Reading from the N-terminus, the 754-residue chain is Transcription factor MBP1 (754 aa).

Residues 6–112 (IYSAKYSGVD…FTQQEGSASP (107 aa)) form the HTH APSES-type domain. Positions 37-58 (ATHILKAAKFPKAKRTRILEKE) form a DNA-binding region, H-T-H motif. 2 disordered regions span residues 105 to 215 (QQEG…FGRS) and 239 to 301 (LDIE…MQTP). Over residues 147–162 (SSQQQQPVSQQQQQQP) the composition is skewed to low complexity. 2 stretches are compositionally biased toward polar residues: residues 177 to 187 (ATVTLQRSQSE) and 203 to 215 (TKLPSLQPQFGRS). The span at 257 to 272 (TKHEDNTHLMNTKDEP) shows a compositional bias: basic and acidic residues. A compositionally biased stretch (low complexity) spans 273-289 (VSSSSSLPSSPSEFSQS). Polar residues predominate over residues 290 to 301 (VAFGSRSNMQTP). 2 ANK repeats span residues 375 to 404 (EHHTAFHWACAMGTLPIVEALLKAGSSIRS) and 493 to 522 (DGNSPLHYAATNKDDQFYQLLLQNGALTTV).

In terms of assembly, MBF contains SWI6 and MBP1.

The protein resides in the nucleus. Binds to MCB elements (Mlu I cell cycle box) found in the promoter of most DNA synthesis genes. Transcriptional activation by MBF has an important role in the transition from G1 to S phase. It may have a dual role in that it behaves as an activator of transcription at the G1-S boundary and as a repressor during other stages of the cell cycle. The polypeptide is Transcription factor MBP1 (MBP1) (Kluyveromyces lactis (strain ATCC 8585 / CBS 2359 / DSM 70799 / NBRC 1267 / NRRL Y-1140 / WM37) (Yeast)).